A 525-amino-acid polypeptide reads, in one-letter code: Glutamate--cysteine ligase (525 aa).

Belongs to the glutamate--cysteine ligase type 1 family. Type 1 subfamily.

The enzyme catalyses L-cysteine + L-glutamate + ATP = gamma-L-glutamyl-L-cysteine + ADP + phosphate + H(+). The protein operates within sulfur metabolism; glutathione biosynthesis; glutathione from L-cysteine and L-glutamate: step 1/2. This Vibrio vulnificus (strain YJ016) protein is Glutamate--cysteine ligase.